Reading from the N-terminus, the 62-residue chain is Large ribosomal subunit protein uL30 (62 aa).

This sequence belongs to the universal ribosomal protein uL30 family. As to quaternary structure, part of the 50S ribosomal subunit.

This is Large ribosomal subunit protein uL30 from Geobacillus thermodenitrificans (strain NG80-2).